The primary structure comprises 364 residues: Histidinol-phosphate aminotransferase (364 aa).

K220 is subject to N6-(pyridoxal phosphate)lysine.

The protein belongs to the class-II pyridoxal-phosphate-dependent aminotransferase family. Histidinol-phosphate aminotransferase subfamily. Homodimer. Pyridoxal 5'-phosphate serves as cofactor.

It carries out the reaction L-histidinol phosphate + 2-oxoglutarate = 3-(imidazol-4-yl)-2-oxopropyl phosphate + L-glutamate. It participates in amino-acid biosynthesis; L-histidine biosynthesis; L-histidine from 5-phospho-alpha-D-ribose 1-diphosphate: step 7/9. The polypeptide is Histidinol-phosphate aminotransferase (Stenotrophomonas maltophilia (strain R551-3)).